The primary structure comprises 248 residues: 5'-nucleotidase SurE (248 aa).

A divalent metal cation contacts are provided by Asp8, Asp9, Ser39, and Asn91.

The protein belongs to the SurE nucleotidase family. A divalent metal cation is required as a cofactor.

It localises to the cytoplasm. The catalysed reaction is a ribonucleoside 5'-phosphate + H2O = a ribonucleoside + phosphate. Nucleotidase that shows phosphatase activity on nucleoside 5'-monophosphates. The sequence is that of 5'-nucleotidase SurE from Neisseria meningitidis serogroup A / serotype 4A (strain DSM 15465 / Z2491).